A 345-amino-acid chain; its full sequence is Protoheme IX farnesyltransferase (345 aa).

The next 9 helical transmembrane spans lie at valine 33–histidine 53, proline 54–leucine 74, alanine 105–tryptophan 125, leucine 126–leucine 146, isoleucine 154–glycine 174, leucine 182–isoleucine 202, glutamine 226–leucine 246, glycine 247–valine 267, and isoleucine 315–isoleucine 335.

This sequence belongs to the UbiA prenyltransferase family. Protoheme IX farnesyltransferase subfamily.

Its subcellular location is the cell inner membrane. It carries out the reaction heme b + (2E,6E)-farnesyl diphosphate + H2O = Fe(II)-heme o + diphosphate. The protein operates within porphyrin-containing compound metabolism; heme O biosynthesis; heme O from protoheme: step 1/1. In terms of biological role, converts heme B (protoheme IX) to heme O by substitution of the vinyl group on carbon 2 of heme B porphyrin ring with a hydroxyethyl farnesyl side group. The chain is Protoheme IX farnesyltransferase from Caulobacter sp. (strain K31).